Here is a 464-residue protein sequence, read N- to C-terminus: Cytoplasmic tRNA 2-thiolation protein 2 (464 aa).

It belongs to the CTU2/NCS2 family.

The protein localises to the cytoplasm. Its pathway is tRNA modification; 5-methoxycarbonylmethyl-2-thiouridine-tRNA biosynthesis. Plays a central role in 2-thiolation of mcm(5)S(2)U at tRNA wobble positions of tRNA(Lys), tRNA(Glu) and tRNA(Gln). May act by forming a heterodimer with NCS6/CTU1 that ligates sulfur from thiocarboxylated URM1 onto the uridine of tRNAs at wobble position. The protein is Cytoplasmic tRNA 2-thiolation protein 2 of Oryza sativa subsp. indica (Rice).